Consider the following 446-residue polypeptide: Phosphoglucosamine mutase (446 aa).

Serine 102 (phosphoserine intermediate) is an active-site residue. The Mg(2+) site is built by serine 102, aspartate 241, aspartate 243, and aspartate 245. A Phosphoserine modification is found at serine 102.

This sequence belongs to the phosphohexose mutase family. It depends on Mg(2+) as a cofactor. Post-translationally, activated by phosphorylation.

The enzyme catalyses alpha-D-glucosamine 1-phosphate = D-glucosamine 6-phosphate. Catalyzes the conversion of glucosamine-6-phosphate to glucosamine-1-phosphate. The sequence is that of Phosphoglucosamine mutase from Xylella fastidiosa (strain M12).